We begin with the raw amino-acid sequence, 553 residues long: Protein DA1-related 1 (553 aa).

Residues Gly-10 to Asp-41 form a disordered region. In terms of domain architecture, UIM 1 spans Phe-42–Val-61. Residues Ile-62 to Glu-77 are compositionally biased toward basic and acidic residues. A disordered region spans residues Ile-62–Glu-91. The span at Thr-78–Glu-91 shows a compositional bias: acidic residues. The UIM 2 domain maps to Asp-87–Arg-106. Residues Ala-122 to Met-141 form the UIM 3; degenerate domain. The UIM 4 domain occupies Glu-149–Pro-168. The residue at position 166 (Ser-166) is a Phosphoserine. The region spanning Arg-188–Pro-248 is the LIM zinc-binding domain.

In terms of assembly, interacts with ubiquitin, TCP14 and TCP15. Polyubiquitinated by DA2.

In terms of biological role, acts redundantly with DA1 and DAR2 to regulate endoreduplication during leaf development. Together with DA1 and DAR2, modulates the protein stability of the transcription factors TCP14 and TCP15, which repress endoreduplication by directly regulating the expression of cell-cycle genes. This Arabidopsis thaliana (Mouse-ear cress) protein is Protein DA1-related 1.